The chain runs to 347 residues: Selenide, water dikinase 2 (347 aa).

U18 is an active-site residue. Residue U18 is a non-standard amino acid, selenocysteine. ATP contacts are provided by residues K21 and 48–50 (TSD). D51 contributes to the Mg(2+) binding site. ATP-binding positions include D68, D91, and 138–140 (GHT). D91 serves as a coordination point for Mg(2+). Residue D226 coordinates Mg(2+).

It belongs to the selenophosphate synthase 1 family. Class I subfamily. In terms of assembly, homodimer. Requires Mg(2+) as cofactor.

The catalysed reaction is hydrogenselenide + ATP + H2O = selenophosphate + AMP + phosphate + 2 H(+). Its function is as follows. Synthesizes selenophosphate from selenide and ATP. This chain is Selenide, water dikinase 2, found in Peptoclostridium acidaminophilum (Eubacterium acidaminophilum).